Consider the following 48-residue polypeptide: ATP synthase protein 8 (48 aa).

A helical transmembrane segment spans residues 4–24 (LVPFYFINILSFGFLIFTVLL).

Belongs to the ATPase protein 8 family. In terms of assembly, F-type ATPases have 2 components, CF(1) - the catalytic core - and CF(0) - the membrane proton channel.

It is found in the mitochondrion membrane. Its function is as follows. Mitochondrial membrane ATP synthase (F(1)F(0) ATP synthase or Complex V) produces ATP from ADP in the presence of a proton gradient across the membrane which is generated by electron transport complexes of the respiratory chain. F-type ATPases consist of two structural domains, F(1) - containing the extramembraneous catalytic core and F(0) - containing the membrane proton channel, linked together by a central stalk and a peripheral stalk. During catalysis, ATP synthesis in the catalytic domain of F(1) is coupled via a rotary mechanism of the central stalk subunits to proton translocation. Part of the complex F(0) domain. Minor subunit located with subunit a in the membrane. The protein is ATP synthase protein 8 (atp8) of Schizosaccharomyces pombe (strain 972 / ATCC 24843) (Fission yeast).